A 310-amino-acid chain; its full sequence is Ribosomal protein uL3 glutamine methyltransferase (310 aa).

This sequence belongs to the protein N5-glutamine methyltransferase family. PrmB subfamily.

It carries out the reaction L-glutaminyl-[ribosomal protein uL3] + S-adenosyl-L-methionine = N(5)-methyl-L-glutaminyl-[ribosomal protein uL3] + S-adenosyl-L-homocysteine + H(+). In terms of biological role, methylates large ribosomal subunit protein uL3 on a specific glutamine residue. The protein is Ribosomal protein uL3 glutamine methyltransferase of Aliivibrio fischeri (strain ATCC 700601 / ES114) (Vibrio fischeri).